The chain runs to 486 residues: Protein nucleotidyltransferase YdiU (486 aa).

Gly-90, Gly-92, Arg-93, Lys-113, Asp-125, Gly-126, Arg-176, and Arg-183 together coordinate ATP. Asp-252 (proton acceptor) is an active-site residue. Mg(2+) is bound by residues Asn-253 and Asp-262. Asp-262 is a binding site for ATP.

The protein belongs to the SELO family. Mg(2+) serves as cofactor. Mn(2+) is required as a cofactor.

It carries out the reaction L-seryl-[protein] + ATP = 3-O-(5'-adenylyl)-L-seryl-[protein] + diphosphate. It catalyses the reaction L-threonyl-[protein] + ATP = 3-O-(5'-adenylyl)-L-threonyl-[protein] + diphosphate. The enzyme catalyses L-tyrosyl-[protein] + ATP = O-(5'-adenylyl)-L-tyrosyl-[protein] + diphosphate. The catalysed reaction is L-histidyl-[protein] + UTP = N(tele)-(5'-uridylyl)-L-histidyl-[protein] + diphosphate. It carries out the reaction L-seryl-[protein] + UTP = O-(5'-uridylyl)-L-seryl-[protein] + diphosphate. It catalyses the reaction L-tyrosyl-[protein] + UTP = O-(5'-uridylyl)-L-tyrosyl-[protein] + diphosphate. Functionally, nucleotidyltransferase involved in the post-translational modification of proteins. It can catalyze the addition of adenosine monophosphate (AMP) or uridine monophosphate (UMP) to a protein, resulting in modifications known as AMPylation and UMPylation. This chain is Protein nucleotidyltransferase YdiU, found in Pseudomonas putida (strain GB-1).